The sequence spans 392 residues: D-amino-acid oxidase 2 (392 aa).

Positions 10, 13, 33, 34, 45, 46, 50, and 52 each coordinate FAD. Anthranilate contacts are provided by Phe-56, Tyr-245, Tyr-262, and Arg-311. Positions 245, 262, and 311 each coordinate (R)-lactate. Arg-311, Gly-361, Ser-362, Gly-364, and Gln-366 together coordinate FAD. Ser-362 contributes to the anthranilate binding site. Ser-362 contacts (R)-lactate. A Microbody targeting signal motif is present at residues 390–392; that stretch reads AKL.

It belongs to the DAMOX/DASOX family. It depends on FAD as a cofactor.

The protein localises to the peroxisome matrix. It catalyses the reaction a D-alpha-amino acid + O2 + H2O = a 2-oxocarboxylate + H2O2 + NH4(+). It carries out the reaction D-methionine + O2 + H2O = 4-methylsulfanyl-2-oxobutanoate + H2O2 + NH4(+). The enzyme catalyses D-serine + O2 + H2O = 3-hydroxypyruvate + H2O2 + NH4(+). The catalysed reaction is D-histidine + O2 + H2O = 3-(imidazol-5-yl)pyruvate + H2O2 + NH4(+). It catalyses the reaction D-proline + O2 = 1-pyrroline-2-carboxylate + H2O2. It carries out the reaction D-alanine + O2 + H2O = pyruvate + H2O2 + NH4(+). The enzyme catalyses D-leucine + O2 + H2O = 4-methyl-2-oxopentanoate + H2O2 + NH4(+). The catalysed reaction is D-valine + O2 + H2O = 3-methyl-2-oxobutanoate + H2O2 + NH4(+). Catalyzes the oxidative deamination of D-amino acids with broad substrate specificity. Enables the organism to utilize D-amino acids as a source of nutrients. Enables the organism to utilize D-alanine, D-cysteine, D-histidine, D-leucine, D-methionine, D-phenylalanine, D-proline, D-serine, D-threonine, D-aspartate and D-valine as a nitrogen source and may also contribute to utlization of D-tryptophan, D-tyrosine and D-asparagine as a nitrogen source. Protects the organism from the toxicity of D-amino acids, including from D-alanine. May play a role in its interaction with the host. This is D-amino-acid oxidase 2 from Cryptococcus deuterogattii (strain R265) (Cryptococcus gattii VGII (strain R265)).